The sequence spans 465 residues: Mothers against decapentaplegic homolog 1 (465 aa).

At methionine 1 the chain carries N-acetylmethionine. Residues 12–136 form the MH1 domain; that stretch reads PAVKRLLGWK…YKRVESPVLP (125 aa). Zn(2+) is bound by residues cysteine 64, cysteine 109, cysteine 121, and histidine 126. A disordered region spans residues 162 to 246; sequence NEPHMPLNAT…DGSQPMDTNM (85 aa). Low complexity predominate over residues 179–212; that stretch reads PNSHPFPHSPNSSYPNSPGGSSSTYPHSPTSSDP. Positions 221 to 232 are enriched in pro residues; the sequence is DTPPPAYLPPED. The MH2 domain occupies 271–465; that stretch reads WCSIVYYELN…SPHNPISSVS (195 aa). At threonine 322 the chain carries Phosphothreonine; by MINK1, TNIK and MAP4K4. Residues 418-428 are L3 loop; it reads KGWGAEYHRQD. Phosphoserine occurs at positions 463 and 465.

Belongs to the dwarfin/SMAD family. As to quaternary structure, found in a complex with SMAD4 and YY1. Interacts with HGS, NANOG and ZCCHC12. Upon C-terminus phosphorylation: forms trimers with another SMAD1 and the co-SMAD SMAD4. Interacts with PEBP2-alpha subunit, CREB-binding protein (CBP), p300, SMURF1, SMURF2, USP15 and HOXC8. Associates with ZNF423 or ZNF521 in response to BMP2 leading to activate transcription of BMP target genes. Interacts with SKOR1. Interacts (via MH2 domain) with LEMD3. Binding to LEMD3 results in at least a partial reduction of receptor-mediated phosphorylation. Forms a ternary complex with PSMB4 and OAZ1 before PSMB4 is incorporated into the 20S proteasome. Interacts (via MH2 domain) with FAM83G (via MH2 domain); in a SMAD4-independent manner. Interacts with ZC3H3. Interacts with TMEM119. Interacts (via MH1 and MH2 domains) with ZNF8. Interacts with RANBP3L; the interaction increases when SMAD1 is not phosphorylated and mediates SMAD1 nuclear export. Interacts with EGR1; this interaction inhibits SMAD1 dephosphorylation. Interacts with SMAD6. Interacts with YAP1. Interacts with MTMR4; negatively regulates BMP signaling through SMAD1 dephosphorylation and retention in endosomes. Post-translationally, phosphorylation of the C-terminal SVS motif by BMP type 1 receptor kinase activates SMAD1 by promoting dissociation from the receptor and trimerization with SMAD4. Phosphorylation by ERK2 MAP kinase in response to EGF or HGF prevents SMAD1 nuclear accumulation and transcriptional activity in response to BMP. Dephosphorylation, probably by PPM1A, induces its export from the nucleus to the cytoplasm. Dephosphorylation is inhibited by association with EGR1. Phosphorylation by CDK8/9 creates binding sites for YAP1, and subsequent phosphorylation by GSK3 switches off YAP1 binding and adds binding sites for SMURF1. Ubiquitinated by SMAD-specific E3 ubiquitin ligase SMURF1, leading to its degradation. Monoubiquitinated, leading to prevent DNA-binding. Deubiquitination by USP15 alleviates inhibition and promotes activation of TGF-beta target genes. Dephosphorylation, probably by PPM1A, induces its export from the nucleus to the cytoplasm. Phospho-SMAD1 is ubiquitinated by CHIP leading to disruption of the SMAD1-SMAD4 complex. In terms of tissue distribution, ubiquitous.

Its subcellular location is the cytoplasm. It is found in the nucleus. Transcriptional modulator that plays a role in various cellular processes, including embryonic development, cell differentiation, and tissue homeostasis. Upon BMP ligand binding to their receptors at the cell surface, is phosphorylated by activated type I BMP receptors (BMPRIs) and associates with SMAD4 to form a heteromeric complex which translocates into the nucleus acting as transcription factor. In turn, the hetero-trimeric complex recognizes cis-regulatory elements containing Smad Binding Elements (SBEs) to modulate the outcome of the signaling network. SMAD1/OAZ1/PSMB4 complex mediates the degradation of the CREBBP/EP300 repressor SNIP1. Positively regulates BMP4-induced expression of odontogenic development regulator MSX1 following IPO7-mediated nuclear import. This Mus musculus (Mouse) protein is Mothers against decapentaplegic homolog 1 (Smad1).